Here is a 312-residue protein sequence, read N- to C-terminus: Carbonic anhydrase 4 (312 aa).

The signal sequence occupies residues 1–18 (MRLLLALLVLAAAPPQAR). Residues 21-285 (SHWCYQIQVK…LGQRQVFRSG (265 aa)) enclose the Alpha-carbonic anhydrase domain. Disulfide bonds link C24–C36 and C46–C229. A glycan (N-linked (GlcNAc...) asparagine) is linked at N33. H88 serves as the catalytic Proton donor/acceptor. The Zn(2+) site is built by H115, H117, and H140. N-linked (GlcNAc...) asparagine glycans are attached at residues N152 and N195. 225–226 (TT) is a substrate binding site. N265 carries N-linked (GlcNAc...) asparagine glycosylation. S284 carries GPI-anchor amidated serine lipidation. Positions 285–312 (GAPGLLLAQPLPTLLAPVLACLTVGFLR) are cleaved as a propeptide — removed in mature form.

It belongs to the alpha-carbonic anhydrase family. In terms of assembly, interacts with SLC4A4. It depends on Zn(2+) as a cofactor.

Its subcellular location is the cell membrane. It carries out the reaction hydrogencarbonate + H(+) = CO2 + H2O. Its activity is regulated as follows. Inhibited by acetazolamide. Functionally, catalyzes the reversible hydration of carbon dioxide into bicarbonate and protons and thus is essential to maintaining intracellular and extracellular pH. May stimulate the sodium/bicarbonate transporter activity of SLC4A4 that acts in pH homeostasis. It is essential for acid overload removal from the retina and retina epithelium, and acid release in the choriocapillaris in the choroid. This chain is Carbonic anhydrase 4 (CA4), found in Bos taurus (Bovine).